We begin with the raw amino-acid sequence, 277 residues long: Insulin-induced gene 1 protein (277 aa).

Residues 1–84 are Cytoplasmic-facing; that stretch reads MPRLHDHFWS…PYPNTWHHRL (84 aa). Residues 51–66 show a composition bias toward low complexity; it reads HGAPDADPAPRGRSAA. The interval 51–73 is disordered; it reads HGAPDADPAPRGRSAAMSGPEPG. A helical transmembrane segment spans residues 85-107; sequence LQRSLVLFSVGVVLALVLNLLQI. At 108–126 the chain is on the lumenal side; the sequence is QRNVTLFPEEVIATIFSSA. Residues 127 to 144 form a helical membrane-spanning segment; the sequence is WWVPPCCGTAAAVVGLLY. Topologically, residues 145 to 159 are cytoplasmic; it reads PCIDSHLGEPHKFKR. Residues Lys156 and Lys158 each participate in a glycyl lysine isopeptide (Lys-Gly) (interchain with G-Cter in ubiquitin) cross-link. Residues 160–182 form a helical membrane-spanning segment; the sequence is EWASVMRCIAVFVGINHASAKLD. The Lumenal portion of the chain corresponds to 183 to 185; sequence FAN. The chain crosses the membrane as a helical span at residues 186–204; the sequence is NVQLSLTLAALSLGLWWTF. Residues 205–209 lie on the Cytoplasmic side of the membrane; it reads DRSRS. Residue Ser207 is modified to Phosphoserine; by PCK1. Residues 210 to 231 form a helical membrane-spanning segment; the sequence is GLGLGITIAFLATLITQFLVYN. At 232–245 the chain is on the lumenal side; it reads GVYQYTSPDFLYIR. The helical transmembrane segment at 246–263 threads the bilayer; the sequence is SWLPCIFFSGGVTVGNIG. Over 264-277 the chain is Cytoplasmic; the sequence is RQLAMGVPEKPHSD. The short motif at 271–277 is the KxHxx element; that stretch reads PEKPHSD.

The protein belongs to the INSIG family. In terms of assembly, interacts with SCAP; interaction is direct and only takes place in the presence of sterols; it prevents interaction between SCAP and the coat protein complex II (COPII). Associates with the SCAP-SREBP complex (composed of SCAP and SREBF1/SREBP1 or SREBF2/SREBP2); association is mediated via its interaction with SCAP and only takes place in the presence of sterols. Interaction with SCAP is mutually exclusive with PAQR3. Interacts with HMGCR (via its SSD); the interaction, accelerated by sterols, leads to the recruitment of HMGCR to AMFR/gp78 for its ubiquitination by the sterol-mediated ERAD pathway. Interacts with AMFR/gp78 (via its membrane domain); the interaction recruits HMCR at the ER membrane for its ubiquitination and degradation by the sterol-mediated ERAD pathway. Interacts with SOAT2/ACAT2; leading to promote recruitment of AMFR/gp78 and subsequent ubiquitination of SOAT2/ACAT2. Interacts with RNF139. Interacts with RNF145. In terms of processing, phosphorylation at Ser-207 by PCK1 reduces binding to oxysterol, disrupting the interaction between INSIG1 and SCAP, thereby promoting nuclear translocation of SREBP proteins (SREBF1/SREBP1 or SREBF2/SREBP2) and subsequent transcription of downstream lipogenesis-related genes. Ubiquitinated by AMFR/gp78 in response to sterol deprivation, leading to its degradation: when the SCAP-SREBP complex becomes dissociated from INSIG1, INSIG1 is then ubiquitinated and degraded in proteasomes. Although ubiquitination is required for rapid INSIG1 degradation, it is not required for release of the SCAP-SREBP complex. Ubiquitinated by RNF139. Expressed in all tissues tested with highest expression in the liver.

Its subcellular location is the endoplasmic reticulum membrane. Oxysterol-binding protein that mediates feedback control of cholesterol synthesis by controlling both endoplasmic reticulum to Golgi transport of SCAP and degradation of HMGCR. Acts as a negative regulator of cholesterol biosynthesis by mediating the retention of the SCAP-SREBP complex in the endoplasmic reticulum, thereby blocking the processing of sterol regulatory element-binding proteins (SREBPs) SREBF1/SREBP1 and SREBF2/SREBP2. Binds oxysterol, including 25-hydroxycholesterol, regulating interaction with SCAP and retention of the SCAP-SREBP complex in the endoplasmic reticulum. In presence of oxysterol, interacts with SCAP, retaining the SCAP-SREBP complex in the endoplasmic reticulum, thereby preventing SCAP from escorting SREBF1/SREBP1 and SREBF2/SREBP2 to the Golgi. Sterol deprivation or phosphorylation by PCK1 reduce oxysterol-binding, disrupting the interaction between INSIG1 and SCAP, thereby promoting Golgi transport of the SCAP-SREBP complex, followed by processing and nuclear translocation of SREBF1/SREBP1 and SREBF2/SREBP2. Also regulates cholesterol synthesis by regulating degradation of HMGCR: initiates the sterol-mediated ubiquitin-mediated endoplasmic reticulum-associated degradation (ERAD) of HMGCR via recruitment of the reductase to the ubiquitin ligases AMFR/gp78 and/or RNF139. Also regulates degradation of SOAT2/ACAT2 when the lipid levels are low: initiates the ubiquitin-mediated degradation of SOAT2/ACAT2 via recruitment of the ubiquitin ligases AMFR/gp78. The sequence is that of Insulin-induced gene 1 protein from Homo sapiens (Human).